A 343-amino-acid chain; its full sequence is Cell division protein ZipA (343 aa).

Residues 1–4 (MDLN) are Periplasmic-facing. Residues 5–25 (TILIILGILALIGLVAHGIWS) traverse the membrane as a helical segment. Over 26–343 (NRREKSQYFD…MAEAAYLARV (318 aa)) the chain is Cytoplasmic. The tract at residues 39–98 (AFHRNPQSTGRPSAQASQPMTPNFAQPAKETEQIRQTYQEPQVRQMSSSPEQQTRPTAQA) is disordered. Polar residues-rich tracts occupy residues 43–62 (NPQSTGRPSAQASQPMTPNF) and 72–95 (IRQTYQEPQVRQMSSSPEQQTRPT).

This sequence belongs to the ZipA family. As to quaternary structure, interacts with FtsZ via their C-terminal domains.

It localises to the cell inner membrane. Essential cell division protein that stabilizes the FtsZ protofilaments by cross-linking them and that serves as a cytoplasmic membrane anchor for the Z ring. Also required for the recruitment to the septal ring of downstream cell division proteins. This chain is Cell division protein ZipA, found in Actinobacillus succinogenes (strain ATCC 55618 / DSM 22257 / CCUG 43843 / 130Z).